The following is a 737-amino-acid chain: 1,4-alpha-glucan branching enzyme GlgB (737 aa).

Residue D399 is the Nucleophile of the active site. E452 serves as the catalytic Proton donor.

The protein belongs to the glycosyl hydrolase 13 family. GlgB subfamily. As to quaternary structure, monomer.

It catalyses the reaction Transfers a segment of a (1-&gt;4)-alpha-D-glucan chain to a primary hydroxy group in a similar glucan chain.. The protein operates within glycan biosynthesis; glycogen biosynthesis. Catalyzes the formation of the alpha-1,6-glucosidic linkages in glycogen by scission of a 1,4-alpha-linked oligosaccharide from growing alpha-1,4-glucan chains and the subsequent attachment of the oligosaccharide to the alpha-1,6 position. This Chlamydia muridarum (strain MoPn / Nigg) protein is 1,4-alpha-glucan branching enzyme GlgB.